A 162-amino-acid chain; its full sequence is Putative 4-hydroxy-4-methyl-2-oxoglutarate aldolase (162 aa).

Residues 75–78 and Arg-97 each bind substrate; that span reads GDML. Residue Asp-98 coordinates a divalent metal cation.

It belongs to the class II aldolase/RraA-like family. Homotrimer. A divalent metal cation is required as a cofactor.

It catalyses the reaction 4-hydroxy-4-methyl-2-oxoglutarate = 2 pyruvate. The enzyme catalyses oxaloacetate + H(+) = pyruvate + CO2. Catalyzes the aldol cleavage of 4-hydroxy-4-methyl-2-oxoglutarate (HMG) into 2 molecules of pyruvate. Also contains a secondary oxaloacetate (OAA) decarboxylase activity due to the common pyruvate enolate transition state formed following C-C bond cleavage in the retro-aldol and decarboxylation reactions. The sequence is that of Putative 4-hydroxy-4-methyl-2-oxoglutarate aldolase from Pseudomonas syringae pv. tomato (strain ATCC BAA-871 / DC3000).